We begin with the raw amino-acid sequence, 650 residues long: Chaperone protein DnaK (650 aa).

Phosphothreonine; by autocatalysis is present on Thr200. A compositionally biased stretch (low complexity) spans 612-632 (GEGATAGAAAGAGAAGGQQAQ). Residues 612–650 (GEGATAGAAAGAGAAGGQQAQPQDDNVVDAEFKEVNDKK) are disordered. The span at 641 to 650 (AEFKEVNDKK) shows a compositional bias: basic and acidic residues.

It belongs to the heat shock protein 70 family.

Acts as a chaperone. The protein is Chaperone protein DnaK of Cupriavidus necator (strain ATCC 17699 / DSM 428 / KCTC 22496 / NCIMB 10442 / H16 / Stanier 337) (Ralstonia eutropha).